A 398-amino-acid polypeptide reads, in one-letter code: MTTSTGFDNNAYNLPALRLSDVPNPAQTRVVVGMSGGVDSSVSAVLLQQAGFQVEGLFMKNWEEDDGTEYCTAMEDLADAQAVCDKIGINLHTANFAMEYWDRVFEHFLAEYQAGRTPNPDILCNKEIKFKAFLDYAVTLGADYIATGHYTRRSVNYTREDGLEVAHLMRGLDNNKDQSYFLHAVGGDKIAKTLFPVGELEKPEVRRIAEEHDLITAKKKDSTGICFIGERRFKDFLQQYLPAKPGNIVTDDGITIGKHDGLMYYTLGQRGGIGIGGVKDRPEEPWFVLQKDLSNNELIVGQGHDHPMLLSQRLTAYKLDWVERIAPAAIFSEQGLKCMAKTRYRQPDQSCTVFADSDDGSRVKVIFDEPQRAVTPGQSAVFYIGEVCLGGGVIESFE.

ATP-binding positions include 33–40 (GMSGGVDS) and methionine 59. Residues 119–121 (NPD) form an interaction with target base in tRNA region. Cysteine 124 serves as the catalytic Nucleophile. Cysteines 124 and 226 form a disulfide. Glycine 148 is an ATP binding site. The tract at residues 176 to 178 (KDQ) is interaction with tRNA. Cysteine 226 functions as the Cysteine persulfide intermediate in the catalytic mechanism. The interval 343–344 (RY) is interaction with tRNA.

This sequence belongs to the MnmA/TRMU family.

It is found in the cytoplasm. It catalyses the reaction S-sulfanyl-L-cysteinyl-[protein] + uridine(34) in tRNA + AH2 + ATP = 2-thiouridine(34) in tRNA + L-cysteinyl-[protein] + A + AMP + diphosphate + H(+). In terms of biological role, catalyzes the 2-thiolation of uridine at the wobble position (U34) of tRNA, leading to the formation of s(2)U34. The chain is tRNA-specific 2-thiouridylase MnmA from Psychrobacter sp. (strain PRwf-1).